Reading from the N-terminus, the 229-residue chain is Potassium/proton antiporter CemA (229 aa).

A run of 4 helical transmembrane segments spans residues 7 to 27 (FTPLPYLASIVFLPWWVSLSF), 114 to 134 (IICFAILSVYSILGNEELVIL), 154 to 174 (ILLVTDLWIGFHSPHGWELMI), and 189 to 209 (IISGLVSTFPVILDTIVKYWI).

It belongs to the CemA family.

Its subcellular location is the plastid. The protein localises to the chloroplast inner membrane. The enzyme catalyses K(+)(in) + H(+)(out) = K(+)(out) + H(+)(in). Functionally, contributes to K(+)/H(+) antiport activity by supporting proton efflux to control proton extrusion and homeostasis in chloroplasts in a light-dependent manner to modulate photosynthesis. Prevents excessive induction of non-photochemical quenching (NPQ) under continuous-light conditions. Indirectly promotes efficient inorganic carbon uptake into chloroplasts. The polypeptide is Potassium/proton antiporter CemA (Acorus calamus var. americanus (American sweet flag)).